The following is a 790-amino-acid chain: Pentatricopeptide repeat-containing protein OTP51, chloroplastic (790 aa).

The transit peptide at 1–56 (MATTSPCAAPSPSLRCPLALSHPFASPPPPPALRLAGPKLLPGRLAVSPPPGIPAV) directs the protein to the chloroplast. 10 PPR repeats span residues 182–216 (NFAL…GRVP), 217–254 (AEST…GGYK), 256–296 (RLSL…NLDV), 299–333 (DVYA…GFDE), 334–368 (GIDV…GSDL), 369–403 (PVQA…NIPP), 404–438 (NVAS…DMKH), 439–469 (LMPA…CIAR), 473–507 (NRIL…GMIG), and 509–543 (NTKS…KYDV). The segment at 762-790 (GSSIGSDGTQDTDTDSDDDMQMSDTERDE) is disordered. The span at 771-790 (QDTDTDSDDDMQMSDTERDE) shows a compositional bias: acidic residues.

Belongs to the PPR family. P subfamily.

Its subcellular location is the plastid. It localises to the chloroplast. In terms of biological role, promotes the splicing of group II introns in chloroplasts. Required for the splicing of intron 2 of plastid ycf3 transcripts, a factor required for the assembly of photosystem I (PSI). Involved in the splicing of atpF, ndhA, petB and rps16 chloroplastic transcripts. Required for the assembly of PSI. The protein is Pentatricopeptide repeat-containing protein OTP51, chloroplastic of Oryza sativa subsp. japonica (Rice).